The primary structure comprises 471 residues: UDP-N-acetylmuramate--L-alanine ligase (471 aa).

Residue 114-120 (GTHGKTT) coordinates ATP.

This sequence belongs to the MurCDEF family.

The protein localises to the cytoplasm. It catalyses the reaction UDP-N-acetyl-alpha-D-muramate + L-alanine + ATP = UDP-N-acetyl-alpha-D-muramoyl-L-alanine + ADP + phosphate + H(+). It functions in the pathway cell wall biogenesis; peptidoglycan biosynthesis. Its function is as follows. Cell wall formation. The sequence is that of UDP-N-acetylmuramate--L-alanine ligase from Rhizobium etli (strain ATCC 51251 / DSM 11541 / JCM 21823 / NBRC 15573 / CFN 42).